The chain runs to 938 residues: MAVKHPAFRKKFPLLVTGSLLALQPAFSLQSFAAEQYDCQASPTGGWACAPKTATSALPPRPQHSRSAVSTTSGSATATATKQEPAPVLVTESKGRALASRSPDYSHLDWVPRDKLTAAQLAEAGPYCAGAYIEPLRPGMDDTTPLDESPMYVSAKASRYEQEKQIATLAGDVVLRQSGMQVEADEASLHQAENRGELVGNVRLRDKGTLVVGDRAELQLDNGEARIDNAEYVMHQAHVRGSALYAKREETAIIRLKDGTYTRCEPGDNAWHLKGNNVTLNPATGFGTATNVTLRVKDIPVFYTPYIYFPIDDRRQSGFLPPSLGTSSSNGFSLQTPYYFNLAPNYDATLYPTYMAKRGLLMEGEFRYLTESSEGQVGGAWLNDQEDERKLQSEYEDQRWMYSWQHKQGLNSRLLAEVDYTDISDPYYFQDLDTDLGIETQSYVNQRGTLTYRGDSYTARLNVHAYELANITDITPYDRLPQITLDGKLPFNPGGLDFTYGTEYVRFDRNLRSGFFVDKDGVTGRPQDLWYDARLTGLNRADGERLHLEPGVSLPLNWSWGFVKPQVKYLHTQYQVNLDGQGKADLATNDPENQWFGVDYKGSPNRGVGLFSLDSGLYFDRNTQLFGRETRQTLEPRAFYLYVPEEDQTDIPIFDTGEPTFSYASLWRENRFSGKDRIGDENKLSLGVTSRWIEPNGFERQRFSVGQAFYFEDRKVQLAGIDYRGRQDATSDVSPYALEYLYRFNRDWRFSSTFNWDPDQHATRSGSAMFHYQPEDNPNKIVNLGYRYRNDIVRYDRDSGTWTTNPDYGNPTLADGSPNPNYIKNYYKIDQHDFSVIWPLAPQWSLISRWQYDYGRNRTLEAFGGFEYDSCCWKLRLINRYWIDYDEVSLDPSRNDEPDRGIFLQIVLKGLGGVVGNKVETFLDQGIQGYREREDQAF.

An N-terminal signal peptide occupies residues 1-33 (MAVKHPAFRKKFPLLVTGSLLALQPAFSLQSFA). The interval 52–96 (KTATSALPPRPQHSRSAVSTTSGSATATATKQEPAPVLVTESKGR) is disordered. The segment covering 65-81 (SRSAVSTTSGSATATAT) has biased composition (low complexity).

It belongs to the LptD family. As to quaternary structure, component of the lipopolysaccharide transport and assembly complex. Interacts with LptE and LptA.

It localises to the cell outer membrane. Functionally, together with LptE, is involved in the assembly of lipopolysaccharide (LPS) at the surface of the outer membrane. The polypeptide is LPS-assembly protein LptD (Ectopseudomonas mendocina (strain ymp) (Pseudomonas mendocina)).